A 150-amino-acid chain; its full sequence is Small ribosomal subunit protein uS11 (150 aa).

The disordered stretch occupies residues 130 to 150 (DVTPIPSDSTRRKSGRRGRRL). Residues 141-150 (RKSGRRGRRL) show a composition bias toward basic residues.

It belongs to the universal ribosomal protein uS11 family.

The protein is Small ribosomal subunit protein uS11 (RPS14) of Lupinus luteus (European yellow lupine).